The chain runs to 539 residues: Chitin deacetylase 1 (539 aa).

Positions 1–23 are cleaved as a signal peptide; it reads MARYARVATLAACLLFACALADG. A Chitin-binding type-2 domain is found at 42 to 104; that stretch reads QELCKDKDAG…WKDAVKNCKL (63 aa). 6 disulfides stabilise this stretch: C80-C93, C122-C134, C129-C147, C141-C156, C168-C180, and C173-C178. The region spanning 121 to 157 is the LDL-receptor class A domain; the sequence is LCQDGFLACGDSTCIERGLFCNGEKDCGDGSDENSCD. D206 lines the Zn(2+) pocket. 5 disulfides stabilise this stretch: C230–C489, C354–C361, C391–C397, C497–C520, and C503–C523. Residue N244 is glycosylated (N-linked (GlcNAc...) asparagine). Positions 261 and 265 each coordinate Zn(2+). The N-linked (GlcNAc...) asparagine glycan is linked to N296.

It belongs to the carbohydrate esterase 4 (CE4) family. Interacts with CPAP3-A1. It depends on Zn(2+) as a cofactor. Highly expressed in epidermis and head. Moderate expression levels in fat body, Malpighian tubule, testis and midgut. Low expression in silk gland and ovary.

Its subcellular location is the secreted. It carries out the reaction [(1-&gt;4)-N-acetyl-beta-D-glucosaminyl](n) + n H2O = chitosan + n acetate. With respect to regulation, binding to the accessory protein CPAP3-A1 is essential for chitinase activity. In terms of biological role, hydrolyzes the N-acetamido groups of N-acetyl-D-glucosamine residues in chitin. The polypeptide is Chitin deacetylase 1 (Bombyx mori (Silk moth)).